We begin with the raw amino-acid sequence, 318 residues long: Ribonuclease Z (318 aa).

Residues His-63, His-65, Asp-67, His-68, His-142, Asp-213, and His-273 each coordinate Zn(2+). The active-site Proton acceptor is Asp-67.

The protein belongs to the RNase Z family. In terms of assembly, homodimer. Requires Zn(2+) as cofactor.

It catalyses the reaction Endonucleolytic cleavage of RNA, removing extra 3' nucleotides from tRNA precursor, generating 3' termini of tRNAs. A 3'-hydroxy group is left at the tRNA terminus and a 5'-phosphoryl group is left at the trailer molecule.. Its function is as follows. Zinc phosphodiesterase, which displays some tRNA 3'-processing endonuclease activity. Probably involved in tRNA maturation, by removing a 3'-trailer from precursor tRNA. This chain is Ribonuclease Z, found in Leuconostoc mesenteroides subsp. mesenteroides (strain ATCC 8293 / DSM 20343 / BCRC 11652 / CCM 1803 / JCM 6124 / NCDO 523 / NBRC 100496 / NCIMB 8023 / NCTC 12954 / NRRL B-1118 / 37Y).